We begin with the raw amino-acid sequence, 361 residues long: Hydroxymethylglutaryl-CoA synthase (361 aa).

The active-site Proton donor/acceptor is the E92. The active-site Acyl-thioester intermediate is C124. 4 residues coordinate (3S)-3-hydroxy-3-methylglutaryl-CoA: C124, S165, T214, and H247. H247 serves as the catalytic Proton donor/acceptor. Position 252 (K252) interacts with CoA. Positions 256, 279, and 309 each coordinate (3S)-3-hydroxy-3-methylglutaryl-CoA.

It belongs to the thiolase-like superfamily. Archaeal HMG-CoA synthase family. Interacts with acetoacetyl-CoA thiolase that catalyzes the precedent step in the pathway and with a DUF35 protein. The acetoacetyl-CoA thiolase/HMG-CoA synthase complex channels the intermediate via a fused CoA-binding site, which allows for efficient coupling of the endergonic thiolase reaction with the exergonic HMGCS reaction.

The enzyme catalyses acetoacetyl-CoA + acetyl-CoA + H2O = (3S)-3-hydroxy-3-methylglutaryl-CoA + CoA + H(+). The protein operates within metabolic intermediate biosynthesis; (R)-mevalonate biosynthesis; (R)-mevalonate from acetyl-CoA: step 2/3. Functionally, catalyzes the condensation of acetyl-CoA with acetoacetyl-CoA to form 3-hydroxy-3-methylglutaryl-CoA (HMG-CoA). Functions in the mevalonate (MVA) pathway leading to isopentenyl diphosphate (IPP), a key precursor for the biosynthesis of isoprenoid compounds that are building blocks of archaeal membrane lipids. In Aeropyrum pernix (strain ATCC 700893 / DSM 11879 / JCM 9820 / NBRC 100138 / K1), this protein is Hydroxymethylglutaryl-CoA synthase.